A 474-amino-acid polypeptide reads, in one-letter code: Coiled-coil domain-containing protein 174 (474 aa).

Disordered regions lie at residues 39-86 (GVFG…REKL) and 129-170 (GATR…PSEE). Composition is skewed to basic and acidic residues over residues 64-86 (RAEK…REKL) and 129-142 (GATR…ERDA). A coiled-coil region spans residues 64-98 (RAEKDAEQKLEEQKTLDKSREKLEEKAKLYEKMTK). The span at 148–157 (NDDDDEEEFS) shows a compositional bias: acidic residues. Ser-206 is subject to Phosphoserine. Residues 276–317 (LEMLREQTTDQRIKRENIKEKRKAILEARLAKLRQKKMKKSK) adopt a coiled-coil conformation. Disordered regions lie at residues 309–372 (RQKK…IREW) and 389–461 (ELRA…VTFQ). Basic and acidic residues-rich tracts occupy residues 316–327 (SKVDGTEEESRA) and 356–372 (IQER…IREW). The span at 410-419 (RTGSLSSQPW) shows a compositional bias: polar residues. A compositionally biased stretch (low complexity) spans 430–453 (GHSSGQSQEPSSSHTSTPASESSP).

Its subcellular location is the nucleus. Its function is as follows. Probably involved in neuronal development. This Rattus norvegicus (Rat) protein is Coiled-coil domain-containing protein 174 (Ccdc174).